The primary structure comprises 347 residues: Quinolinate synthase (347 aa).

Residues His-47 and Ser-68 each coordinate iminosuccinate. Cys-113 serves as a coordination point for [4Fe-4S] cluster. Iminosuccinate is bound by residues 139–141 (YAN) and Ser-156. Position 200 (Cys-200) interacts with [4Fe-4S] cluster. Residues 226 to 228 (HPE) and Thr-243 each bind iminosuccinate. Cys-297 lines the [4Fe-4S] cluster pocket.

Belongs to the quinolinate synthase family. Type 1 subfamily. [4Fe-4S] cluster serves as cofactor.

The protein localises to the cytoplasm. It catalyses the reaction iminosuccinate + dihydroxyacetone phosphate = quinolinate + phosphate + 2 H2O + H(+). The protein operates within cofactor biosynthesis; NAD(+) biosynthesis; quinolinate from iminoaspartate: step 1/1. Its function is as follows. Catalyzes the condensation of iminoaspartate with dihydroxyacetone phosphate to form quinolinate. The sequence is that of Quinolinate synthase from Salmonella gallinarum (strain 287/91 / NCTC 13346).